A 175-amino-acid chain; its full sequence is Regenerating islet-derived protein 3-alpha (175 aa).

The N-terminal stretch at 1–26 (MLPHLVLNSISWMLLSCLLFVFQVQG) is a signal peptide. Residues 27-37 (EDFQKEVPSPR) constitute a propeptide that is removed on maturation. Intrachain disulfides connect cysteine 40–cysteine 51, cysteine 68–cysteine 171, and cysteine 146–cysteine 163. In terms of domain architecture, C-type lectin spans 47–172 (YRSHCYALVM…CDGTLPFVCK (126 aa)). Residues histidine 50, histidine 107, glutamate 121, and histidine 145 each coordinate Zn(2+). The tract at residues 103–118 (WIGLHDPTMGQQPNGG) is sufficient to activate EXTL3.

In terms of assembly, forms a hexameric membrane-permeabilizing oligomeric pore on membrane phospholipids. The hexamer is formed by three dimers related by helical symmetry. Forms filaments, filamentation traps pore complexes and limits damage to host cells. Interacts with EXTL3. Proteolytic processing by trypsin removes an inhibitory N-terminal propeptide and is essential for peptidoglycan binding and antibacterial activity. In terms of tissue distribution, small intestine and pancreas.

It localises to the secreted. Its function is as follows. Bactericidal C-type lectin. The lack of the EPN motif may explain its inability to bind peptidoglycan. Functionally, acts as a hormone in response to different stimuli like anti-inflammatory signals, such as IL17A, or gut microbiome. Secreted by different cell types to activate its receptor EXTL3 and induce cell specific signaling pathways. Induced by IL17A in keratinocytes, regulates keratinocyte proliferation and differentiation after skin injury via activation of EXTL3-PI3K-AKT signaling pathway. In parallel, inhibits skin inflammation through the inhibition of inflammatory cytokines such as IL6 and TNF. In pancreas, is able to permealize beta-cells membrane and stimulate their proliferation. This is Regenerating islet-derived protein 3-alpha (Reg3a) from Mus musculus (Mouse).